The chain runs to 408 residues: Phosphoglycerate kinase (408 aa).

Substrate contacts are provided by residues 24–26 (DLN), arginine 39, 62–65 (HLGR), arginine 121, and arginine 161. ATP is bound by residues lysine 211, glycine 307, glutamate 338, and 364–367 (GGDS).

This sequence belongs to the phosphoglycerate kinase family. In terms of assembly, monomer.

It is found in the cytoplasm. The enzyme catalyses (2R)-3-phosphoglycerate + ATP = (2R)-3-phospho-glyceroyl phosphate + ADP. It functions in the pathway carbohydrate degradation; glycolysis; pyruvate from D-glyceraldehyde 3-phosphate: step 2/5. This Paenarthrobacter aurescens (strain TC1) protein is Phosphoglycerate kinase.